A 200-amino-acid chain; its full sequence is Glycerol-3-phosphate acyltransferase (200 aa).

6 helical membrane passes run 9-29 (IIIG…AYFW), 54-74 (VPGM…VLLA), 81-101 (DIAV…PLWL), 112-132 (GAGA…LVWL), 140-160 (YVSL…ALLN), and 165-185 (YLIF…SNIG).

The protein belongs to the PlsY family. In terms of assembly, probably interacts with PlsX.

Its subcellular location is the cell membrane. The enzyme catalyses an acyl phosphate + sn-glycerol 3-phosphate = a 1-acyl-sn-glycero-3-phosphate + phosphate. It functions in the pathway lipid metabolism; phospholipid metabolism. Functionally, catalyzes the transfer of an acyl group from acyl-phosphate (acyl-PO(4)) to glycerol-3-phosphate (G3P) to form lysophosphatidic acid (LPA). This enzyme utilizes acyl-phosphate as fatty acyl donor, but not acyl-CoA or acyl-ACP. The polypeptide is Glycerol-3-phosphate acyltransferase (Desulforamulus reducens (strain ATCC BAA-1160 / DSM 100696 / MI-1) (Desulfotomaculum reducens)).